The sequence spans 421 residues: Gamma-glutamyl phosphate reductase (421 aa).

It belongs to the gamma-glutamyl phosphate reductase family.

It localises to the cytoplasm. The catalysed reaction is L-glutamate 5-semialdehyde + phosphate + NADP(+) = L-glutamyl 5-phosphate + NADPH + H(+). Its pathway is amino-acid biosynthesis; L-proline biosynthesis; L-glutamate 5-semialdehyde from L-glutamate: step 2/2. Its function is as follows. Catalyzes the NADPH-dependent reduction of L-glutamate 5-phosphate into L-glutamate 5-semialdehyde and phosphate. The product spontaneously undergoes cyclization to form 1-pyrroline-5-carboxylate. The sequence is that of Gamma-glutamyl phosphate reductase from Acinetobacter baylyi (strain ATCC 33305 / BD413 / ADP1).